Consider the following 929-residue polypeptide: MLRRLLQPAYNVALSGTSASTLPRKSASVGLVRTALMPVDYNAGALFCAMRFTSGTEKERKREPKRGSKRRSKATTTLSTPTDAQTSVTGAREGVALPQENMPDAIQPPATLEVRAAEVKEEPLAATPPQIQPQEETMGPIDGEPQLPLHSTLVYNALTGRMTSETSPSFLCLKSIGFGVNNKRQLYVEKPDVLRDLAQRMRKGTATLPSNWPVTIIRALGVILRNRRVEDPAEAIQQMMQVKINNLTHSRYAAVVNAVGDTDLQNILDGGLADEFVAVDLNEEQEKVINLALKGHLMYIGGSAGTGKTVLLRALCRRMQAEGLRVAMTATTGVAGCHIGGSTFHHAMGVSAQGDFVRKNHLLSYDAIIIDEVSMLPKKMFEEFDRVLREEAGAPDVPFGGVQIILCGDFLQLGVINEPPIIHSTTFREKFVKIRLETQVRQAKSSLFADALQQMRVGLVPESLTASVEQLPPGTMVPAAVNLLPTNKEVNTANEEELKRLPGDAVTLTPETGITALRCDTTATLLMRTTKDFKVEEFTKHLRGLLQATVDIPRASMVSAYRIYEDGHAVRVYLPQSESVAWRDAIRERFLEVAGLINDLDIGATVTEIIPSGDGLHTPEHEECLQRLMAKHPIAQPLTLKKGCRVLLRTNLTSRLVNGSIGTVVDFVECSMENIPVALRCERVNRCVDRYRIYCTMECGMPVPLLPVVKFHSGETIVVPPWEFLVGGNPITQYYSLSSVSLPLSLAYAFTVHKVQGLTLVGRVHLELSRMWPCEHLLYVAMSRVRNPEQLSMSSFDPKMVLANEACVKFDRELNTVDNLPSLAEYPVSSWKRCNDMVYHLRRQGTSLDRYLQNGAAKEGGSVPVQQLGLSGPVKGSLEHSMVVSRRLRKLIKQTERTIRMHERRQKKMAVEGAKQTDTTKASSGESLE.

The transit peptide at 1-52 (MLRRLLQPAYNVALSGTSASTLPRKSASVGLVRTALMPVDYNAGALFCAMRF) directs the protein to the mitochondrion. Positions 55–89 (GTEKERKREPKRGSKRRSKATTTLSTPTDAQTSVT) are disordered. The span at 56 to 66 (TEKERKREPKR) shows a compositional bias: basic and acidic residues. The segment covering 74–89 (ATTTLSTPTDAQTSVT) has biased composition (polar residues). 302 to 309 (GSAGTGKT) is a binding site for ATP. Residues 776–796 (HLLYVAMSRVRNPEQLSMSSF) mediate DNA binding. The tract at residues 902–929 (HERRQKKMAVEGAKQTDTTKASSGESLE) is disordered. Polar residues predominate over residues 916-929 (QTDTTKASSGESLE).

Belongs to the helicase family. PIF1 subfamily. As to quaternary structure, monomer. It depends on Mg(2+) as a cofactor.

The protein localises to the mitochondrion. The catalysed reaction is Couples ATP hydrolysis with the unwinding of duplex DNA at the replication fork by translocating in the 5'-3' direction. This creates two antiparallel DNA single strands (ssDNA). The leading ssDNA polymer is the template for DNA polymerase III holoenzyme which synthesizes a continuous strand.. It carries out the reaction ATP + H2O = ADP + phosphate + H(+). DNA-dependent ATPase and probable 5'-3' DNA helicase required for the maintenance of mitochondrial (kinetoplast) genome stability. Essential for replication of kinetoplast minicircles. Involved in the segregation of minicircle progeny. This is ATP-dependent DNA helicase PIF1 from Trypanosoma brucei brucei (strain 927/4 GUTat10.1).